We begin with the raw amino-acid sequence, 240 residues long: Heme oxygenase 1 (240 aa).

Heme b contacts are provided by Arg-10, His-17, Tyr-125, Lys-168, and Arg-172.

This sequence belongs to the heme oxygenase family.

It carries out the reaction heme b + 3 reduced [NADPH--hemoprotein reductase] + 3 O2 = biliverdin IXalpha + CO + Fe(2+) + 3 oxidized [NADPH--hemoprotein reductase] + 3 H2O + H(+). In terms of biological role, catalyzes the opening of the heme ring with the release of iron. Key enzyme in the synthesis of the chromophoric part of the photosynthetic antennae. The polypeptide is Heme oxygenase 1 (pbsA1) (Synechocystis sp. (strain ATCC 27184 / PCC 6803 / Kazusa)).